A 358-amino-acid chain; its full sequence is Magnesium-protoporphyrin IX monomethyl ester [oxidative] cyclase 2 (358 aa).

The protein belongs to the AcsF family. Requires Fe cation as cofactor.

It catalyses the reaction Mg-protoporphyrin IX 13-monomethyl ester + 3 NADPH + 3 O2 + 2 H(+) = 3,8-divinyl protochlorophyllide a + 3 NADP(+) + 5 H2O. The protein operates within porphyrin-containing compound metabolism; chlorophyll biosynthesis (light-independent). Its function is as follows. Catalyzes the formation of the isocyclic ring in chlorophyll biosynthesis. Mediates the cyclase reaction, which results in the formation of divinylprotochlorophyllide (Pchlide) characteristic of all chlorophylls from magnesium-protoporphyrin IX 13-monomethyl ester (MgPMME). The protein is Magnesium-protoporphyrin IX monomethyl ester [oxidative] cyclase 2 of Nostoc sp. (strain PCC 7120 / SAG 25.82 / UTEX 2576).